The following is a 65-amino-acid chain: MSGSIKVTLAKSMIGRPEKHRKVLRAMGLTKVNRTVCLQDTPTVQGMIRKVSHLLRVEESADGSE.

This sequence belongs to the universal ribosomal protein uL30 family. In terms of assembly, part of the 50S ribosomal subunit.

The protein is Large ribosomal subunit protein uL30 of Desulfosudis oleivorans (strain DSM 6200 / JCM 39069 / Hxd3) (Desulfococcus oleovorans).